Consider the following 166-residue polypeptide: Chemoreceptor glutamine deamidase CheD (166 aa).

This sequence belongs to the CheD family. As to quaternary structure, forms a complex with CheC.

The catalysed reaction is L-glutaminyl-[protein] + H2O = L-glutamyl-[protein] + NH4(+). Its function is as follows. Deamidates glutamine residues to glutamate on methyl-accepting chemotaxis receptors (MCPs). CheD-mediated MCP deamidation is required for productive communication of the conformational signals of the chemoreceptors to the CheA kinase. The protein is Chemoreceptor glutamine deamidase CheD of Bacillus velezensis (strain DSM 23117 / BGSC 10A6 / LMG 26770 / FZB42) (Bacillus amyloliquefaciens subsp. plantarum).